The primary structure comprises 439 residues: Protein PHYTOCHROME KINASE SUBSTRATE 1 (439 aa).

Polar residues predominate over residues 1 to 14 (MVTLTPSSASTPKT). Disordered stretches follow at residues 1–22 (MVTL…MKNN), 54–80 (KTLN…APED), and 100–139 (QGSS…SSWN). The segment covering 63–79 (KQEEFGDEKKMVKKAPE) has biased composition (basic and acidic residues). 2 stretches are compositionally biased toward polar residues: residues 100 to 109 (QGSSVLSLTN) and 118 to 139 (DSKQ…SSWN). 2 positions are modified to phosphoserine: Ser-238 and Ser-244. Disordered regions lie at residues 259–311 (LPLP…PTCY) and 355–439 (TAKS…LYSQ). A compositionally biased stretch (basic and acidic residues) spans 412–421 (TKPKSFETRR). Positions 424-439 (SNSSISHTQSSLLYSQ) are enriched in low complexity.

The protein belongs to the PKS family. In terms of assembly, interacts with PKS2, RPT3, PHOT1, PHOT2 and the C-termini of both phytochromes A (phyA) and B (phyB). Binds both spectral forms of phytochrome, Pr and Pfr. In terms of processing, phosphorylated on Ser and to a lower extent on Thr by phytochromes. Phosphorylation is stimulated twofold by red light. In terms of tissue distribution, expressed in young seedlings in both darkness and light. Moderate in leaves and very low in roots and flowers. Expressed in the elongation zone of the root and hypocotyl.

It is found in the cell membrane. Its function is as follows. May be responsible for light-regulated cytoplasmic sequestration of phytochromes or may be a negative regulator of phytochrome B signaling. Component of the network that modulates the very low-fluence response (VLFR) branch of phyA signaling. Acts positively in PHOT1 signaling. Regulates phytochrome-mediated photomorphogenesis and hypocotyl phototropism. Involved in the control of leaf flattening and leaf positioning. Promotes negative root phototropism and negatively regulates root gravitropism. May act by controlling auxin homeostasis. The sequence is that of Protein PHYTOCHROME KINASE SUBSTRATE 1 (PKS1) from Arabidopsis thaliana (Mouse-ear cress).